The sequence spans 248 residues: MARAILWVLLTVMAVSLLLHAGVEGVNFDIENQCPYTVWAAGTPFGGGIELKRGQSWRVNVPGGARGRFWGRTGCSFDGNGRGRCNTGDCGGLLNCQGSGGVPSTLLEYALNQYQNLDFYDISLVDGFNLRMTVVLSNTNCKRIACNSDINSKCPGELKVVDGCRSACAAFNTPAYCCTGSFLDNCPPTGYSQFFKRECPLAYSYAKDDPTSTFTCPGGSDYKIIFCGNGDSQSNSTSTSSGSLYAVE.

An N-terminal signal peptide occupies residues 1–25; it reads MARAILWVLLTVMAVSLLLHAGVEG. 8 disulfide bridges follow: Cys34-Cys227, Cys75-Cys85, Cys90-Cys96, Cys141-Cys216, Cys146-Cys199, Cys154-Cys164, Cys168-Cys177, and Cys178-Cys186. Asn235 carries an N-linked (GlcNAc...) asparagine glycan.

It belongs to the thaumatin family. In terms of tissue distribution, mainly expressed in male and female strobili, and, at lower levels, in roots of seedlings and saplings.

In terms of biological role, may be involved in disease resistance. This is Pathogenesis-related thaumatin-like protein 3.4 from Cryptomeria japonica (Japanese cedar).